Here is a 202-residue protein sequence, read N- to C-terminus: LexA repressor (202 aa).

The H-T-H motif DNA-binding region spans 28–48 (RAEIAQRLGFRSPNAAEEHLK). Residues Ser-119 and Lys-156 each act as for autocatalytic cleavage activity in the active site.

It belongs to the peptidase S24 family. Homodimer.

The enzyme catalyses Hydrolysis of Ala-|-Gly bond in repressor LexA.. Its function is as follows. Represses a number of genes involved in the response to DNA damage (SOS response), including recA and lexA. Binds to the 16 bp palindromic sequence 5'-CTGTATATATATACAG-3'. In the presence of single-stranded DNA, RecA interacts with LexA causing an autocatalytic cleavage which disrupts the DNA-binding part of LexA, leading to derepression of the SOS regulon and eventually DNA repair. In Escherichia fergusonii (strain ATCC 35469 / DSM 13698 / CCUG 18766 / IAM 14443 / JCM 21226 / LMG 7866 / NBRC 102419 / NCTC 12128 / CDC 0568-73), this protein is LexA repressor.